Consider the following 142-residue polypeptide: Neuritin (142 aa).

Positions 1–27 are cleaved as a signal peptide; the sequence is MGLKLNGRYISLILAVQIAYLVQAVRA. Glycine 116 is lipidated: GPI-anchor amidated glycine. The propeptide at 117-142 is removed in mature form; sequence AAGPLLPALPVLLVSLSAALATWLSF.

Belongs to the neuritin family. Component of the outer core of AMPAR complex. AMPAR complex consists of an inner core made of 4 pore-forming GluA/GRIA proteins (GRIA1, GRIA2, GRIA3 and GRIA4) and 4 major auxiliary subunits arranged in a twofold symmetry. One of the two pairs of distinct binding sites is occupied either by CNIH2, CNIH3 or CACNG2, CACNG3. The other harbors CACNG2, CACNG3, CACNG4, CACNG8 or GSG1L. This inner core of AMPAR complex is complemented by outer core constituents binding directly to the GluA/GRIA proteins at sites distinct from the interaction sites of the inner core constituents. Outer core constituents include at least PRRT1, PRRT2, CKAMP44/SHISA9, FRRS1L and NRN1. The proteins of the inner and outer core serve as a platform for other, more peripherally associated AMPAR constituents. Alone or in combination, these auxiliary subunits control the gating and pharmacology of the AMPAR complex and profoundly impact their biogenesis and protein processing.

It is found in the cell membrane. The protein localises to the synapse. Its function is as follows. Promotes neurite outgrowth and especially branching of neuritic processes in primary hippocampal and cortical cells. The sequence is that of Neuritin (NRN1) from Bos taurus (Bovine).